A 154-amino-acid chain; its full sequence is Lipoprotein signal peptidase (154 aa).

Transmembrane regions (helical) follow at residues 7-27 (VLYL…KNYI), 58-78 (IFSG…AVVV), and 88-108 (NWLF…NFID). Active-site residues include Asp-117 and Asp-133. The chain crosses the membrane as a helical span at residues 128 to 148 (IFNIADSAITVGIVLVFIYLI).

This sequence belongs to the peptidase A8 family.

The protein localises to the cell membrane. The enzyme catalyses Release of signal peptides from bacterial membrane prolipoproteins. Hydrolyzes -Xaa-Yaa-Zaa-|-(S,diacylglyceryl)Cys-, in which Xaa is hydrophobic (preferably Leu), and Yaa (Ala or Ser) and Zaa (Gly or Ala) have small, neutral side chains.. The protein operates within protein modification; lipoprotein biosynthesis (signal peptide cleavage). Its function is as follows. This protein specifically catalyzes the removal of signal peptides from prolipoproteins. In Lactobacillus gasseri (strain ATCC 33323 / DSM 20243 / BCRC 14619 / CIP 102991 / JCM 1131 / KCTC 3163 / NCIMB 11718 / NCTC 13722 / AM63), this protein is Lipoprotein signal peptidase.